We begin with the raw amino-acid sequence, 351 residues long: Dihydroorotate dehydrogenase (quinone) (351 aa).

Residues 67–71 (AGFDK) and Thr-91 each bind FMN. A substrate-binding site is contributed by Lys-71. Substrate is bound at residue 116–120 (NAMGF). Residues Asn-145 and Asn-178 each contribute to the FMN site. Asn-178 serves as a coordination point for substrate. The active-site Nucleophile is Ser-181. Asn-183 contributes to the substrate binding site. FMN-binding residues include Lys-214 and Thr-242. 243–244 (NT) serves as a coordination point for substrate. FMN contacts are provided by residues Gly-262, Gly-291, and 312–313 (YS).

The protein belongs to the dihydroorotate dehydrogenase family. Type 2 subfamily. As to quaternary structure, monomer. The cofactor is FMN.

It is found in the cell membrane. It carries out the reaction (S)-dihydroorotate + a quinone = orotate + a quinol. It participates in pyrimidine metabolism; UMP biosynthesis via de novo pathway; orotate from (S)-dihydroorotate (quinone route): step 1/1. Its function is as follows. Catalyzes the conversion of dihydroorotate to orotate with quinone as electron acceptor. The protein is Dihydroorotate dehydrogenase (quinone) (pyrD) of Helicobacter pylori (strain J99 / ATCC 700824) (Campylobacter pylori J99).